Consider the following 251-residue polypeptide: uncharacterized protein (251 aa).

This is an uncharacterized protein from Mycoplasma genitalium (strain ATCC 33530 / DSM 19775 / NCTC 10195 / G37) (Mycoplasmoides genitalium).